Here is a 249-residue protein sequence, read N- to C-terminus: Proteasome subunit alpha (249 aa).

The disordered stretch occupies residues Glu-229–Asp-249.

It belongs to the peptidase T1A family. In terms of assembly, the 20S proteasome core is composed of 14 alpha and 14 beta subunits that assemble into four stacked heptameric rings, resulting in a barrel-shaped structure. The two inner rings, each composed of seven catalytic beta subunits, are sandwiched by two outer rings, each composed of seven alpha subunits. The catalytic chamber with the active sites is on the inside of the barrel. Has a gated structure, the ends of the cylinder being occluded by the N-termini of the alpha-subunits. Is capped by the proteasome-associated ATPase, ARC.

It localises to the cytoplasm. The protein operates within protein degradation; proteasomal Pup-dependent pathway. The formation of the proteasomal ATPase ARC-20S proteasome complex, likely via the docking of the C-termini of ARC into the intersubunit pockets in the alpha-rings, may trigger opening of the gate for substrate entry. Interconversion between the open-gate and close-gate conformations leads to a dynamic regulation of the 20S proteasome proteolysis activity. Functionally, component of the proteasome core, a large protease complex with broad specificity involved in protein degradation. This is Proteasome subunit alpha from Thermobifida fusca (strain YX).